We begin with the raw amino-acid sequence, 465 residues long: 3-isopropylmalate dehydratase large subunit (465 aa).

Residues Cys-347, Cys-407, and Cys-410 each coordinate [4Fe-4S] cluster. Residues Asp-416–His-443 form a disordered region.

This sequence belongs to the aconitase/IPM isomerase family. LeuC type 1 subfamily. Heterodimer of LeuC and LeuD. It depends on [4Fe-4S] cluster as a cofactor.

It catalyses the reaction (2R,3S)-3-isopropylmalate = (2S)-2-isopropylmalate. Its pathway is amino-acid biosynthesis; L-leucine biosynthesis; L-leucine from 3-methyl-2-oxobutanoate: step 2/4. Catalyzes the isomerization between 2-isopropylmalate and 3-isopropylmalate, via the formation of 2-isopropylmaleate. The sequence is that of 3-isopropylmalate dehydratase large subunit from Frankia alni (strain DSM 45986 / CECT 9034 / ACN14a).